We begin with the raw amino-acid sequence, 1407 residues long: DNA-directed RNA polymerase subunit beta' (1407 aa).

C70, C72, C85, and C88 together coordinate Zn(2+). 3 residues coordinate Mg(2+): D460, D462, and D464. Zn(2+)-binding residues include C814, C888, C895, and C898. An N6-acetyllysine modification is found at K972.

It belongs to the RNA polymerase beta' chain family. The RNAP catalytic core consists of 2 alpha, 1 beta, 1 beta' and 1 omega subunit. When a sigma factor is associated with the core the holoenzyme is formed, which can initiate transcription. Mg(2+) serves as cofactor. Zn(2+) is required as a cofactor.

It carries out the reaction RNA(n) + a ribonucleoside 5'-triphosphate = RNA(n+1) + diphosphate. Its function is as follows. DNA-dependent RNA polymerase catalyzes the transcription of DNA into RNA using the four ribonucleoside triphosphates as substrates. The sequence is that of DNA-directed RNA polymerase subunit beta' from Shigella flexneri serotype 5b (strain 8401).